The sequence spans 395 residues: Acetate kinase (395 aa).

Residue Asn-8 coordinates Mg(2+). Residue Lys-15 participates in ATP binding. Position 89 (Arg-89) interacts with substrate. The Proton donor/acceptor role is filled by Asp-146. ATP-binding positions include 206 to 210, 281 to 283, and 329 to 333; these read HLGNG, DLR, and GIGEN. Glu-382 contacts Mg(2+).

This sequence belongs to the acetokinase family. In terms of assembly, homodimer. The cofactor is Mg(2+). Requires Mn(2+) as cofactor.

Its subcellular location is the cytoplasm. The enzyme catalyses acetate + ATP = acetyl phosphate + ADP. It functions in the pathway metabolic intermediate biosynthesis; acetyl-CoA biosynthesis; acetyl-CoA from acetate: step 1/2. In terms of biological role, catalyzes the formation of acetyl phosphate from acetate and ATP. Can also catalyze the reverse reaction. This Shouchella clausii (strain KSM-K16) (Alkalihalobacillus clausii) protein is Acetate kinase.